We begin with the raw amino-acid sequence, 84 residues long: Exodeoxyribonuclease 7 small subunit (84 aa).

The protein belongs to the XseB family. In terms of assembly, heterooligomer composed of large and small subunits.

It localises to the cytoplasm. It catalyses the reaction Exonucleolytic cleavage in either 5'- to 3'- or 3'- to 5'-direction to yield nucleoside 5'-phosphates.. In terms of biological role, bidirectionally degrades single-stranded DNA into large acid-insoluble oligonucleotides, which are then degraded further into small acid-soluble oligonucleotides. The sequence is that of Exodeoxyribonuclease 7 small subunit from Bartonella bacilliformis (strain ATCC 35685 / KC583 / Herrer 020/F12,63).